A 119-amino-acid chain; its full sequence is Ribonuclease (119 aa).

2 residues coordinate substrate: Lys6 and Arg9. The active-site Proton acceptor is His11. Cystine bridges form between Cys26–Cys81, Cys40–Cys92, and Cys58–Cys107. Residues Lys41 to Thr45 and Arg82 each bind substrate. Catalysis depends on His114, which acts as the Proton donor.

This sequence belongs to the pancreatic ribonuclease family. Monomer. Interacts with and forms tight 1:1 complexes with RNH1. Dimerization of two such complexes may occur. Interaction with RNH1 inhibits this protein.

It localises to the secreted. The enzyme catalyses an [RNA] containing cytidine + H2O = an [RNA]-3'-cytidine-3'-phosphate + a 5'-hydroxy-ribonucleotide-3'-[RNA].. The catalysed reaction is an [RNA] containing uridine + H2O = an [RNA]-3'-uridine-3'-phosphate + a 5'-hydroxy-ribonucleotide-3'-[RNA].. In terms of biological role, endonuclease that catalyzes the cleavage of RNA on the 3' side of pyrimidine nucleotides. Acts on single-stranded and double-stranded RNA. This is Ribonuclease from Chelonia mydas (Green sea-turtle).